The primary structure comprises 217 residues: Probable GTP-binding protein EngB (217 aa).

In terms of domain architecture, EngB-type G spans 37–214; that stretch reads DGVEIAFAGR…RAAMAKLLEE (178 aa). GTP-binding positions include 45-52, 72-76, 92-95, 159-162, and 193-195; these read GRSNVGKS, GRTQE, DMPG, TKAD, and TSS. Residues S52 and T74 each coordinate Mg(2+).

It belongs to the TRAFAC class TrmE-Era-EngA-EngB-Septin-like GTPase superfamily. EngB GTPase family. The cofactor is Mg(2+).

Functionally, necessary for normal cell division and for the maintenance of normal septation. This Bradyrhizobium diazoefficiens (strain JCM 10833 / BCRC 13528 / IAM 13628 / NBRC 14792 / USDA 110) protein is Probable GTP-binding protein EngB.